The primary structure comprises 71 residues: Protein KleB (71 aa).

A DNA-binding region (H-T-H motif) is located at residues 9 to 28 (VTTNCRRCGKSISTLSRSLI).

This Escherichia coli protein is Protein KleB (kleB).